The following is a 466-amino-acid chain: UDP-N-acetylmuramate--L-alanine ligase (466 aa).

ATP is bound at residue 114 to 120 (GTHGKTT).

It belongs to the MurCDEF family.

The protein resides in the cytoplasm. The catalysed reaction is UDP-N-acetyl-alpha-D-muramate + L-alanine + ATP = UDP-N-acetyl-alpha-D-muramoyl-L-alanine + ADP + phosphate + H(+). It participates in cell wall biogenesis; peptidoglycan biosynthesis. Functionally, cell wall formation. This Mesorhizobium japonicum (strain LMG 29417 / CECT 9101 / MAFF 303099) (Mesorhizobium loti (strain MAFF 303099)) protein is UDP-N-acetylmuramate--L-alanine ligase.